Reading from the N-terminus, the 355-residue chain is S-adenosylmethionine:tRNA ribosyltransferase-isomerase (355 aa).

Belongs to the QueA family. As to quaternary structure, monomer.

It is found in the cytoplasm. The enzyme catalyses 7-aminomethyl-7-carbaguanosine(34) in tRNA + S-adenosyl-L-methionine = epoxyqueuosine(34) in tRNA + adenine + L-methionine + 2 H(+). Its pathway is tRNA modification; tRNA-queuosine biosynthesis. Transfers and isomerizes the ribose moiety from AdoMet to the 7-aminomethyl group of 7-deazaguanine (preQ1-tRNA) to give epoxyqueuosine (oQ-tRNA). This is S-adenosylmethionine:tRNA ribosyltransferase-isomerase from Photorhabdus laumondii subsp. laumondii (strain DSM 15139 / CIP 105565 / TT01) (Photorhabdus luminescens subsp. laumondii).